Here is a 148-residue protein sequence, read N- to C-terminus: 3-hydroxyacyl-[acyl-carrier-protein] dehydratase FabZ (148 aa).

Residue His-50 is part of the active site.

It belongs to the thioester dehydratase family. FabZ subfamily.

It is found in the cytoplasm. The catalysed reaction is a (3R)-hydroxyacyl-[ACP] = a (2E)-enoyl-[ACP] + H2O. Involved in unsaturated fatty acids biosynthesis. Catalyzes the dehydration of short chain beta-hydroxyacyl-ACPs and long chain saturated and unsaturated beta-hydroxyacyl-ACPs. This Levilactobacillus brevis (strain ATCC 367 / BCRC 12310 / CIP 105137 / JCM 1170 / LMG 11437 / NCIMB 947 / NCTC 947) (Lactobacillus brevis) protein is 3-hydroxyacyl-[acyl-carrier-protein] dehydratase FabZ.